The following is a 232-amino-acid chain: Ribonuclease 3 (232 aa).

Positions Ala-10–Gly-135 constitute an RNase III domain. Glu-48 contacts Mg(2+). Asp-52 is an active-site residue. Residues Asn-121 and Glu-124 each contribute to the Mg(2+) site. Glu-124 is a catalytic residue. Residues Asp-161 to Glu-230 enclose the DRBM domain.

The protein belongs to the ribonuclease III family. Homodimer. It depends on Mg(2+) as a cofactor.

The protein resides in the cytoplasm. The enzyme catalyses Endonucleolytic cleavage to 5'-phosphomonoester.. Its function is as follows. Digests double-stranded RNA. Involved in the processing of primary rRNA transcript to yield the immediate precursors to the large and small rRNAs (23S and 16S). Processes some mRNAs, and tRNAs when they are encoded in the rRNA operon. Processes pre-crRNA and tracrRNA of type II CRISPR loci if present in the organism. The polypeptide is Ribonuclease 3 (Anaplasma marginale (strain St. Maries)).